Reading from the N-terminus, the 121-residue chain is Prefoldin subunit beta (121 aa).

This sequence belongs to the prefoldin subunit beta family. In terms of assembly, heterohexamer of two alpha and four beta subunits.

It is found in the cytoplasm. Its function is as follows. Molecular chaperone capable of stabilizing a range of proteins. Seems to fulfill an ATP-independent, HSP70-like function in archaeal de novo protein folding. This is Prefoldin subunit beta (pfdB) from Methanothermobacter thermautotrophicus (strain ATCC 29096 / DSM 1053 / JCM 10044 / NBRC 100330 / Delta H) (Methanobacterium thermoautotrophicum).